The sequence spans 139 residues: D-ribose pyranase (139 aa).

H20 serves as the catalytic Proton donor. Substrate-binding positions include D28, H106, and 128 to 130 (YAN).

It belongs to the RbsD / FucU family. RbsD subfamily. Homodecamer.

Its subcellular location is the cytoplasm. It carries out the reaction beta-D-ribopyranose = beta-D-ribofuranose. The protein operates within carbohydrate metabolism; D-ribose degradation; D-ribose 5-phosphate from beta-D-ribopyranose: step 1/2. Catalyzes the interconversion of beta-pyran and beta-furan forms of D-ribose. The polypeptide is D-ribose pyranase (Aeromonas hydrophila subsp. hydrophila (strain ATCC 7966 / DSM 30187 / BCRC 13018 / CCUG 14551 / JCM 1027 / KCTC 2358 / NCIMB 9240 / NCTC 8049)).